The primary structure comprises 1192 residues: Probable ATP-binding protein BrxC (1192 aa).

Belongs to the BrxC family.

In terms of biological role, BREX systems (bacteriophage exclusion) provide immunity against bacteriophage. A core protein of a type 1 BREX system. This system allows phage adsorption but prevents phage DNA replication, without degradation of the phage DNA. Methylation of bacterial DNA by PglX probably guides self/non-self discrimination. When the brxA-brxB-brxC-pglX and pglZ-brxL operons are transformed into a susceptible B.subtilis strain (BEST7003) they confer resistance to bacteriophages SPbeta, SP16, Zeta, phi3T and SP02 and partial protection to phages SP01 and SP82G (these include lytic and temperate phage). They do not protect against phages phi105, rho10 or rho14. Additionally confers a very slight reduction in efficiency of plasmid transformation. In Bacillus cereus (strain H3081.97), this protein is Probable ATP-binding protein BrxC.